We begin with the raw amino-acid sequence, 193 residues long: MTEYLLLLIGTVLVNNFVLVKFLGLCPFMGVSKKLETAIGMGLATTFVLTLASVCAYLVESYVLRPLGIEYLRTMSFILVIAVVVQFTEMVVHKTSPTLYRLLGIFLPLITTNCAVLGVALLNINENHNFIQSIIYGFGAAVGFSLVLILFASMRERIHVADVPAPFKGASIAMITAGLMSLAFMGFTGLVKL.

Transmembrane regions (helical) follow at residues 5–25 (LLLL…FLGL), 39–59 (IGMG…AYLV), 67–87 (LGIE…VVQF), 102–122 (LLGI…VALL), 134–154 (IIYG…FASM), and 171–191 (SIAM…TGLV).

This sequence belongs to the NqrDE/RnfAE family. The complex is composed of six subunits: RnfA, RnfB, RnfC, RnfD, RnfE and RnfG.

Its subcellular location is the cell inner membrane. Its function is as follows. Part of a membrane-bound complex that couples electron transfer with translocation of ions across the membrane. This is Ion-translocating oxidoreductase complex subunit A from Vibrio cholerae serotype O1 (strain ATCC 39315 / El Tor Inaba N16961).